The following is a 397-amino-acid chain: ATP-dependent RNA helicase eIF4A (397 aa).

A Q motif motif is present at residues 23 to 51; that stretch reads YKFDDLNLKPNIVRGIFGYGYETPSAIQQ. Residues 54–224 form the Helicase ATP-binding domain; the sequence is ILPITEGRDV…TKFMNNPVRI (171 aa). An ATP-binding site is contributed by 67 to 74; sequence AQSGTGKT. The DEAD box motif lies at 172 to 175; sequence DEAD. The 162-residue stretch at 235 to 396 folds into the Helicase C-terminal domain; it reads GIKQFYINVE…EMPADIGALF (162 aa).

This sequence belongs to the DEAD box helicase family. eIF4A subfamily. As to quaternary structure, component of the eIF4F complex, which composition varies with external and internal environmental conditions. It is composed of at least eIF4A, eIF4E and eIF4G.

The protein localises to the cytoplasm. The enzyme catalyses ATP + H2O = ADP + phosphate + H(+). In terms of biological role, ATP-dependent RNA helicase which is a subunit of the eIF4F complex involved in cap recognition and is required for mRNA binding to ribosome. In the current model of translation initiation, eIF4A unwinds RNA secondary structures in the 5'-UTR of mRNAs which is necessary to allow efficient binding of the small ribosomal subunit, and subsequent scanning for the initiator codon. The sequence is that of ATP-dependent RNA helicase eIF4A (TIF1) from Scheffersomyces stipitis (strain ATCC 58785 / CBS 6054 / NBRC 10063 / NRRL Y-11545) (Yeast).